Here is a 418-residue protein sequence, read N- to C-terminus: Histidinol dehydrogenase (418 aa).

Residues Y119, Q180, and N203 each contribute to the NAD(+) site. T226, Q248, and H251 together coordinate substrate. Residues Q248 and H251 each coordinate Zn(2+). Catalysis depends on proton acceptor residues E316 and H317. Residues H317, D350, E404, and H409 each contribute to the substrate site. Residue D350 coordinates Zn(2+). H409 serves as a coordination point for Zn(2+).

It belongs to the histidinol dehydrogenase family. Requires Zn(2+) as cofactor.

The catalysed reaction is L-histidinol + 2 NAD(+) + H2O = L-histidine + 2 NADH + 3 H(+). Its pathway is amino-acid biosynthesis; L-histidine biosynthesis; L-histidine from 5-phospho-alpha-D-ribose 1-diphosphate: step 9/9. Catalyzes the sequential NAD-dependent oxidations of L-histidinol to L-histidinaldehyde and then to L-histidine. The polypeptide is Histidinol dehydrogenase (Staphylococcus aureus (strain COL)).